A 292-amino-acid polypeptide reads, in one-letter code: Calcium-binding protein CBP (292 aa).

The tract at residues 1–80 (MAGYPPNPGS…YGSGGGYGAP (80 aa)) is disordered. Over residues 12 to 21 (YPYGGAGGYG) the composition is skewed to gly residues. Positions 22–40 (APPPPYGSSPAPSAPPYGA) are enriched in pro residues. 2 consecutive EF-hand domains span residues 121–156 (GTDP…YSQS) and 187–222 (YSLQ…LGYS). Ca(2+) is bound by residues Asp-134, Asp-136, Ser-138, Met-140, Glu-145, Asp-200, Asp-202, Ser-204, Lys-206, and Glu-211.

Functionally, potential calcium sensor. This Oryza sativa subsp. japonica (Rice) protein is Calcium-binding protein CBP.